A 572-amino-acid chain; its full sequence is Proline--tRNA ligase (572 aa).

Belongs to the class-II aminoacyl-tRNA synthetase family. ProS type 1 subfamily. Homodimer.

It localises to the cytoplasm. It carries out the reaction tRNA(Pro) + L-proline + ATP = L-prolyl-tRNA(Pro) + AMP + diphosphate. Catalyzes the attachment of proline to tRNA(Pro) in a two-step reaction: proline is first activated by ATP to form Pro-AMP and then transferred to the acceptor end of tRNA(Pro). As ProRS can inadvertently accommodate and process non-cognate amino acids such as alanine and cysteine, to avoid such errors it has two additional distinct editing activities against alanine. One activity is designated as 'pretransfer' editing and involves the tRNA(Pro)-independent hydrolysis of activated Ala-AMP. The other activity is designated 'posttransfer' editing and involves deacylation of mischarged Ala-tRNA(Pro). The misacylated Cys-tRNA(Pro) is not edited by ProRS. The chain is Proline--tRNA ligase from Hydrogenovibrio crunogenus (strain DSM 25203 / XCL-2) (Thiomicrospira crunogena).